A 157-amino-acid polypeptide reads, in one-letter code: Ribonuclease H (157 aa).

One can recognise an RNase H type-1 domain in the interval 3–144; the sequence is NSKTVHLYTD…CDELARDAAT (142 aa). Residues D12, E50, D72, and D136 each coordinate Mg(2+).

The protein belongs to the RNase H family. In terms of assembly, monomer. Mg(2+) serves as cofactor.

Its subcellular location is the cytoplasm. It carries out the reaction Endonucleolytic cleavage to 5'-phosphomonoester.. Functionally, endonuclease that specifically degrades the RNA of RNA-DNA hybrids. The polypeptide is Ribonuclease H (Idiomarina loihiensis (strain ATCC BAA-735 / DSM 15497 / L2-TR)).